A 432-amino-acid chain; its full sequence is Bifunctional protein GlmU (432 aa).

The interval 1-224 is pyrophosphorylase; sequence MSEISVIILA…EENFMGINDK (224 aa). Residues 9-12, Lys23, and 82-83 contribute to the UDP-N-acetyl-alpha-D-glucosamine site; these read LAAG and GT. Asp103 provides a ligand contact to Mg(2+). Positions 136, 150, 165, and 222 each coordinate UDP-N-acetyl-alpha-D-glucosamine. Position 222 (Asn222) interacts with Mg(2+). Residues 225 to 245 are linker; it reads FALSKAETIIQNEIKENLMKN. The segment at 246–432 is N-acetyltransferase; the sequence is GVLMRLPESI…FFAKFFKEIK (187 aa). UDP-N-acetyl-alpha-D-glucosamine is bound by residues Arg309 and Lys326. His337 serves as the catalytic Proton acceptor. UDP-N-acetyl-alpha-D-glucosamine is bound by residues Tyr340 and Asn351. Acetyl-CoA contacts are provided by residues 360–361, Ser379, Ala397, and Arg414; that span reads NY.

The protein in the N-terminal section; belongs to the N-acetylglucosamine-1-phosphate uridyltransferase family. It in the C-terminal section; belongs to the transferase hexapeptide repeat family. In terms of assembly, homotrimer. The cofactor is Mg(2+).

It is found in the cytoplasm. It catalyses the reaction alpha-D-glucosamine 1-phosphate + acetyl-CoA = N-acetyl-alpha-D-glucosamine 1-phosphate + CoA + H(+). The enzyme catalyses N-acetyl-alpha-D-glucosamine 1-phosphate + UTP + H(+) = UDP-N-acetyl-alpha-D-glucosamine + diphosphate. It functions in the pathway nucleotide-sugar biosynthesis; UDP-N-acetyl-alpha-D-glucosamine biosynthesis; N-acetyl-alpha-D-glucosamine 1-phosphate from alpha-D-glucosamine 6-phosphate (route II): step 2/2. The protein operates within nucleotide-sugar biosynthesis; UDP-N-acetyl-alpha-D-glucosamine biosynthesis; UDP-N-acetyl-alpha-D-glucosamine from N-acetyl-alpha-D-glucosamine 1-phosphate: step 1/1. Its pathway is bacterial outer membrane biogenesis; LPS lipid A biosynthesis. Its function is as follows. Catalyzes the last two sequential reactions in the de novo biosynthetic pathway for UDP-N-acetylglucosamine (UDP-GlcNAc). The C-terminal domain catalyzes the transfer of acetyl group from acetyl coenzyme A to glucosamine-1-phosphate (GlcN-1-P) to produce N-acetylglucosamine-1-phosphate (GlcNAc-1-P), which is converted into UDP-GlcNAc by the transfer of uridine 5-monophosphate (from uridine 5-triphosphate), a reaction catalyzed by the N-terminal domain. This chain is Bifunctional protein GlmU, found in Campylobacter hominis (strain ATCC BAA-381 / DSM 21671 / CCUG 45161 / LMG 19568 / NCTC 13146 / CH001A).